A 58-amino-acid chain; its full sequence is Large ribosomal subunit protein bL32c (58 aa).

It belongs to the bacterial ribosomal protein bL32 family.

Its subcellular location is the plastid. It localises to the chloroplast. The protein is Large ribosomal subunit protein bL32c (rpl32) of Adiantum capillus-veneris (Maidenhair fern).